The primary structure comprises 98 residues: Large ribosomal subunit protein uL23 (98 aa).

The protein belongs to the universal ribosomal protein uL23 family. As to quaternary structure, part of the 50S ribosomal subunit. Contacts protein L29, and trigger factor when it is bound to the ribosome.

One of the early assembly proteins it binds 23S rRNA. One of the proteins that surrounds the polypeptide exit tunnel on the outside of the ribosome. Forms the main docking site for trigger factor binding to the ribosome. This chain is Large ribosomal subunit protein uL23, found in Saccharophagus degradans (strain 2-40 / ATCC 43961 / DSM 17024).